Here is a 493-residue protein sequence, read N- to C-terminus: MAKIMIQGTASSVGKSLIVAALCRIFKQDGYSVCPFKSQNMSLNSYITLDGKEMGRAQVVQAYAAGLEPEAYMNPILLKPTSDKKCQIIVNGKVYGNSTAMGYHNLKLRFKDMLKEHFNKLEEDFDIVVMEGAGSPAEINLRDRDIVNMGMAELVDAPVLLVGDIDKGGVFASLAGTMLLLKDGEKERVKGTIINKFRGDVEILKPGLDMLEDIVHIPCLGVVPYTRLQLEDEDGAVEFNKKAYAPIDIAVIKMPHISNFTDLDALKSEEDVSIRFITSKEEFKEPDLLVIPGSKNTIEDLLYLRKCGLEESIKEYSKDGKIVGICGGYQVLGSKIKDPYKVETDLGEIDGLNLLDMETTFEKEKVTTRVSAKLIDEKIENTVYGYEIHMGISEYSENVKPLFKIYDKNGEKVDYFDGAINEKGNVMGTYIHGVFDGVSFREKIINELRVKKGLKKKKSQVYEHMREKELDKLADIVRQSLDMKKIYSIIGMK.

Residues 246–440 (PIDIAVIKMP…IHGVFDGVSF (195 aa)) form the GATase cobBQ-type domain. C326 functions as the Nucleophile in the catalytic mechanism. H432 is an active-site residue.

This sequence belongs to the CobB/CobQ family. CobQ subfamily.

The protein operates within cofactor biosynthesis; adenosylcobalamin biosynthesis. Catalyzes amidations at positions B, D, E, and G on adenosylcobyrinic A,C-diamide. NH(2) groups are provided by glutamine, and one molecule of ATP is hydrogenolyzed for each amidation. In Clostridium botulinum (strain Langeland / NCTC 10281 / Type F), this protein is Cobyric acid synthase.